We begin with the raw amino-acid sequence, 60 residues long: Large ribosomal subunit protein bL32 (60 aa).

The span at 1-20 (MAVQKSRKSRSRRDMRRSHH) shows a compositional bias: basic residues. The disordered stretch occupies residues 1–60 (MAVQKSRKSRSRRDMRRSHHHMEVAELSIDATTGEKHRRHHMTKDGFYRGRQLFKASQED).

The protein belongs to the bacterial ribosomal protein bL32 family.

In Psychrobacter sp. (strain PRwf-1), this protein is Large ribosomal subunit protein bL32.